An 84-amino-acid polypeptide reads, in one-letter code: U2-theraphotoxin-Cg1b 2 (84 aa).

Residues 1 to 21 (MKVSVLITLAVLGVMFLLTSA) form the signal peptide. A propeptide spanning residues 22-48 (EERGSDQMDSPAWLKSMEIIFQSEERE) is cleaved from the precursor. 3 disulfide bridges follow: C49–C63, C56–C68, and C62–C76.

This sequence belongs to the neurotoxin 10 (Hwtx-1) family. 06 (F4b) subfamily. As to expression, expressed by the venom gland.

The protein resides in the secreted. Probable ion channel inhibitor. In Chilobrachys guangxiensis (Chinese earth tiger tarantula), this protein is U2-theraphotoxin-Cg1b 2.